Here is a 490-residue protein sequence, read N- to C-terminus: MANQHFFKPLLPGFHTHLRIPVAFFLKNIEGRYEQKTAELRSDASKITWEVKIDGQRLTDGWKEFALSHDLRIGDIVVFRQERDMSFHVTMLGPSCCEIQYGSCSDEERNLEKKKNPNGEAKSSSLDPSCFSANVAPSSLRYDLMLFPMGFVRENGVVGSGKIVLMNEKGRSWNFNLRQKPSCGTVYVRGGWVSFCDANGLQAGDIYTFKLIKRGGTLVLRLLPKGAESCSLDPSCFVANVAPSTLRYDTLYLPKRFMRENGVDKRRGEMILMNEKGKSWTLDLKLKKSCGTSLIRRGWRSFCSANGLRAGSIITFKLIKKSGTLVLCLLSNEPEEEVCSEANEVESLSTDQESHEESSHNEKISRRKEKKGRMIWKASSSPSENRFVTLNLTPYNILRSALRLPIPFTRMNGINEETKMTLLDKHGMKWLTTLRLVDYKRKRLGMVGGWKGFIQANGVKANESIMLELIWEEETSCVLKFCSKVKLAIK.

3 DNA-binding regions (TF-B3) span residues 3 to 95 (NQHF…LGPS), 130 to 226 (CFSA…LPKG), and 236 to 333 (CFVA…LSNE). Residues 343–367 (NEVESLSTDQESHEESSHNEKISRR) are disordered. The segment covering 352-364 (QESHEESSHNEKI) has biased composition (basic and acidic residues). The TF-B3 4 DNA-binding region spans 387 to 484 (FVTLNLTPYN…TSCVLKFCSK (98 aa)).

It localises to the nucleus. This Arabidopsis thaliana (Mouse-ear cress) protein is B3 domain-containing protein REM14 (REM14).